Reading from the N-terminus, the 314-residue chain is DNA-directed RNA polymerase subunit alpha (314 aa).

Positions 1 to 228 (MIEIEKPRIE…EHLNIFVGLT (228 aa)) are alpha N-terminal domain (alpha-NTD). Residues 245–314 (KEKVLEMSIE…DLGLGLRKED (70 aa)) are alpha C-terminal domain (alpha-CTD).

This sequence belongs to the RNA polymerase alpha chain family. Homodimer. The RNAP catalytic core consists of 2 alpha, 1 beta, 1 beta' and 1 omega subunit. When a sigma factor is associated with the core the holoenzyme is formed, which can initiate transcription.

It carries out the reaction RNA(n) + a ribonucleoside 5'-triphosphate = RNA(n+1) + diphosphate. In terms of biological role, DNA-dependent RNA polymerase catalyzes the transcription of DNA into RNA using the four ribonucleoside triphosphates as substrates. This chain is DNA-directed RNA polymerase subunit alpha, found in Staphylococcus haemolyticus (strain JCSC1435).